A 418-amino-acid chain; its full sequence is Putative competence-damage inducible protein (418 aa).

It belongs to the CinA family.

This chain is Putative competence-damage inducible protein, found in Streptococcus pneumoniae (strain CGSP14).